We begin with the raw amino-acid sequence, 282 residues long: Putative quercetin 2,3-dioxygenase VC_A0969 (282 aa).

Positions methionine 1–glycine 21 are disordered. Residues histidine 59, histidine 61, histidine 103, and glutamate 105 each contribute to the a divalent metal cation site.

Belongs to the pirin family. Requires a divalent metal cation as cofactor.

It catalyses the reaction quercetin + O2 = 2-(3,4-dihydroxybenzoyloxy)-4,6-dihydroxybenzoate + CO. The protein operates within flavonoid metabolism; quercetin degradation. Its function is as follows. Putative quercetin 2,3-dioxygenase. This chain is Putative quercetin 2,3-dioxygenase VC_A0969, found in Vibrio cholerae serotype O1 (strain ATCC 39315 / El Tor Inaba N16961).